We begin with the raw amino-acid sequence, 621 residues long: Chaperone protein DnaK (621 aa).

Thr-175 is modified (phosphothreonine; by autocatalysis). Positions 499–516 (EAHEADDKKRKEDAETRN) are enriched in basic and acidic residues. 2 disordered regions span residues 499–520 (EAHE…NAEN) and 583–621 (AQQG…KDNK). The segment covering 583–602 (AQQGAEGAAGAADSGSANNG) has biased composition (low complexity). A compositionally biased stretch (acidic residues) spans 603 to 621 (GDDDVVDAEVVDDDDKDNK).

The protein belongs to the heat shock protein 70 family.

In terms of biological role, acts as a chaperone. This Bifidobacterium animalis subsp. lactis (strain AD011) protein is Chaperone protein DnaK.